The sequence spans 109 residues: Ribonuclease P protein component (109 aa).

This sequence belongs to the RnpA family. In terms of assembly, consists of a catalytic RNA component (M1 or rnpB) and a protein subunit.

It catalyses the reaction Endonucleolytic cleavage of RNA, removing 5'-extranucleotides from tRNA precursor.. Its function is as follows. RNaseP catalyzes the removal of the 5'-leader sequence from pre-tRNA to produce the mature 5'-terminus. It can also cleave other RNA substrates such as 4.5S RNA. The protein component plays an auxiliary but essential role in vivo by binding to the 5'-leader sequence and broadening the substrate specificity of the ribozyme. In Streptococcus agalactiae serotype III (strain NEM316), this protein is Ribonuclease P protein component.